The sequence spans 153 residues: Adenosine 5'-monophosphoramidase HINT3 (153 aa).

Residues 20–130 enclose the HIT domain; that stretch reads IFCRIANKQE…PASQLGFLSR (111 aa). Residues 46 to 47 and 115 to 117 contribute to the AMP site; these read DI and HLH. The Histidine triad motif signature appears at 113 to 117; sequence HLHLH. Histidine 115 acts as the Tele-AMP-histidine intermediate in catalysis.

This sequence belongs to the HINT family. Forms dimers to octamers and even larger oligomer.

The protein resides in the cytoplasm. The protein localises to the nucleus. The enzyme catalyses adenosine 5'-phosphoramidate + H2O = AMP + NH4(+). Its function is as follows. Exhibits adenosine 5'-monophosphoramidase activity, hydrolyzing purine nucleotide phosphoramidates with a single phosphate group such as adenosine 5'monophosphoramidate (AMP-NH2) to yield AMP and NH2. Hydrolyzes lysyl-AMP (AMP-N-epsilon-(N-alpha-acetyl lysine methyl ester)) generated by lysine tRNA ligase. The chain is Adenosine 5'-monophosphoramidase HINT3 (hint3) from Xenopus tropicalis (Western clawed frog).